The following is a 685-amino-acid chain: Exocyst complex component 8 (685 aa).

Positions 151–251 constitute a PH domain; the sequence is YLVYNGDLTE…WLEILEQTKK (101 aa). Basic and acidic residues predominate over residues 254–263; it reads ALNEKQKQEE. The segment at 254 to 273 is disordered; the sequence is ALNEKQKQEETTPQLPVVPE.

Belongs to the EXO84 family. In terms of assembly, the exocyst complex is composed of exoc1, exoc2, exoc3, exoc4, exoc5, exoc6, exoc7 and exoc8.

Its subcellular location is the cytoplasm. The protein localises to the perinuclear region. The protein resides in the cell projection. It is found in the growth cone. Functionally, component of the exocyst complex involved in the docking of exocytic vesicles with fusion sites on the plasma membrane. The protein is Exocyst complex component 8 (exoc8) of Xenopus laevis (African clawed frog).